Here is a 571-residue protein sequence, read N- to C-terminus: Proline-rich protein 35 (571 aa).

Disordered stretches follow at residues 1 to 27, 79 to 187, 286 to 402, and 476 to 571; these read MSRE…PHYI, GSTT…EGSV, APVS…GSPE, and GPQA…GAEV. Basic residues predominate over residues 16 to 26; sequence ARSRKPKKPHY. Residues 165–175 are compositionally biased toward gly residues; that stretch reads GMGGDPRGVGA. The segment covering 316 to 336 has biased composition (basic and acidic residues); that stretch reads TPRDPGQEGELERAAQSDPRR. Over residues 351 to 367 the composition is skewed to polar residues; it reads PSLTRFCSRSSLPTGSS. The span at 380–399 shows a compositional bias: pro residues; sequence PETPGPEGPLPLQPRGPVPG.

This chain is Proline-rich protein 35 (PRR35), found in Homo sapiens (Human).